We begin with the raw amino-acid sequence, 245 residues long: Probable transcriptional regulatory protein NSE_0641 (245 aa).

Residues 1-22 (MAGHSQYANIKHRKNAQDAKRA) are disordered.

The protein belongs to the TACO1 family.

It localises to the cytoplasm. The polypeptide is Probable transcriptional regulatory protein NSE_0641 (Neorickettsia sennetsu (strain ATCC VR-367 / Miyayama) (Ehrlichia sennetsu)).